Reading from the N-terminus, the 429-residue chain is Carboxypeptidase B (429 aa).

The signal sequence occupies residues 1–15 (MKFLLVLALCAVVYA). Residues 121-423 (NYQELEVIDE…EGIVVGARRA (303 aa)) enclose the Peptidase M14 domain. Zn(2+)-binding residues include His-182 and Glu-185. Substrate-binding positions include 182–185 (HARE), Arg-236, and 256–257 (NR). An intrachain disulfide couples Cys-250 to Cys-273. His-309 is a binding site for Zn(2+). Substrate contacts are provided by residues 310–311 (SF) and Tyr-365. Glu-387 functions as the Proton donor/acceptor in the catalytic mechanism.

Belongs to the peptidase M14 family. The cofactor is Zn(2+).

It localises to the secreted. It catalyses the reaction Preferential release of a C-terminal lysine or arginine amino acid.. Its activity is regulated as follows. Highly resistant to inhibition by potato carboxypeptidase inhibitor (PCI). Moderately inhibited by leech carboxypeptidase inhibitor (LCI) and tick carboxypeptidase inhibitor (TCI). Its function is as follows. Metalloprotease which cleaves a single amino acid from the C-terminal end of polypeptide chains. Shows a strong preference for peptides with a terminal lysine residue. This is Carboxypeptidase B from Helicoverpa zea (Corn earworm moth).